The primary structure comprises 701 residues: Ribosomal RNA large subunit methyltransferase K/L (701 aa).

Residues 44-155 (QAYKICLWSR…SDKLTVYLDL (112 aa)) enclose the THUMP domain.

Belongs to the methyltransferase superfamily. RlmKL family.

The protein localises to the cytoplasm. It carries out the reaction guanosine(2445) in 23S rRNA + S-adenosyl-L-methionine = N(2)-methylguanosine(2445) in 23S rRNA + S-adenosyl-L-homocysteine + H(+). The catalysed reaction is guanosine(2069) in 23S rRNA + S-adenosyl-L-methionine = N(2)-methylguanosine(2069) in 23S rRNA + S-adenosyl-L-homocysteine + H(+). Functionally, specifically methylates the guanine in position 2445 (m2G2445) and the guanine in position 2069 (m7G2069) of 23S rRNA. In Pseudoalteromonas atlantica (strain T6c / ATCC BAA-1087), this protein is Ribosomal RNA large subunit methyltransferase K/L.